The primary structure comprises 760 residues: NAD(P)H-quinone oxidoreductase subunit 5, chloroplastic (760 aa).

A run of 16 helical transmembrane segments spans residues 9-29 (WIISFVTLPVPMLIGMGLLLF), 39-59 (IWAFPSVLLLSIVMVFSIDLF), 89-109 (IDPLTSILLILITTVGILVLV), 125-145 (FVYMSFFNTSMLGLVTSSNLI), 147-167 (IYIFWELVGMCSYLLIGFWFT), 185-205 (GDFGLLLGILGLYWITGSFEF), 221-241 (NEVHFLFVTLCAFLLFSGAIA), 260-280 (TPISALIHAATMVAAGIFLVA), 282-302 (LLPLFVVIPYIMKLIALIGII), 329-349 (LGYTMLALGMGSYRAALFHLI), 356-376 (ALLFLGSGSIIHSMEVIVGYS), 398-418 (IAFLLGTLSLCGIPPLACFWS), 429-449 (YSPIFAIIAFSTAGLTAFYMF), 556-576 (ILFPMLVLVLFTLFIGAIGIP), 620-640 (FSVSIASFGIFIASSLYKPIY), and 734-754 (FYLLLYLFYVLIFLLISSSIF).

This sequence belongs to the complex I subunit 5 family. As to quaternary structure, NDH is composed of at least 16 different subunits, 5 of which are encoded in the nucleus.

It is found in the plastid. The protein localises to the chloroplast thylakoid membrane. The enzyme catalyses a plastoquinone + NADH + (n+1) H(+)(in) = a plastoquinol + NAD(+) + n H(+)(out). It carries out the reaction a plastoquinone + NADPH + (n+1) H(+)(in) = a plastoquinol + NADP(+) + n H(+)(out). Functionally, NDH shuttles electrons from NAD(P)H:plastoquinone, via FMN and iron-sulfur (Fe-S) centers, to quinones in the photosynthetic chain and possibly in a chloroplast respiratory chain. The immediate electron acceptor for the enzyme in this species is believed to be plastoquinone. Couples the redox reaction to proton translocation, and thus conserves the redox energy in a proton gradient. The protein is NAD(P)H-quinone oxidoreductase subunit 5, chloroplastic (ndhF) of Populus trichocarpa (Western balsam poplar).